The chain runs to 765 residues: Phosphoribosylformylglycinamidine synthase subunit PurL (765 aa).

Positions Met-1–Ile-13 are enriched in polar residues. The interval Met-1–Leu-32 is disordered. The active site involves His-65. ATP-binding residues include Tyr-68 and Lys-112. Glu-114 lines the Mg(2+) pocket. Substrate contacts are provided by residues Ser-115–His-118 and Arg-137. His-116 (proton acceptor) is an active-site residue. Position 138 (Asp-138) interacts with Mg(2+). Gln-263 contributes to the substrate binding site. Asp-291 provides a ligand contact to Mg(2+). Residue Glu-335–Gln-337 participates in substrate binding. The ATP site is built by Asn-523 and Gly-560. Asn-561 provides a ligand contact to Mg(2+). Residue Ser-563 participates in substrate binding.

Belongs to the FGAMS family. As to quaternary structure, monomer. Part of the FGAM synthase complex composed of 1 PurL, 1 PurQ and 2 PurS subunits.

It is found in the cytoplasm. It carries out the reaction N(2)-formyl-N(1)-(5-phospho-beta-D-ribosyl)glycinamide + L-glutamine + ATP + H2O = 2-formamido-N(1)-(5-O-phospho-beta-D-ribosyl)acetamidine + L-glutamate + ADP + phosphate + H(+). The protein operates within purine metabolism; IMP biosynthesis via de novo pathway; 5-amino-1-(5-phospho-D-ribosyl)imidazole from N(2)-formyl-N(1)-(5-phospho-D-ribosyl)glycinamide: step 1/2. In terms of biological role, part of the phosphoribosylformylglycinamidine synthase complex involved in the purines biosynthetic pathway. Catalyzes the ATP-dependent conversion of formylglycinamide ribonucleotide (FGAR) and glutamine to yield formylglycinamidine ribonucleotide (FGAM) and glutamate. The FGAM synthase complex is composed of three subunits. PurQ produces an ammonia molecule by converting glutamine to glutamate. PurL transfers the ammonia molecule to FGAR to form FGAM in an ATP-dependent manner. PurS interacts with PurQ and PurL and is thought to assist in the transfer of the ammonia molecule from PurQ to PurL. The polypeptide is Phosphoribosylformylglycinamidine synthase subunit PurL (Mycobacterium avium (strain 104)).